Consider the following 125-residue polypeptide: Cystatin-like cysteine protease inhibitor EPIC2A (125 aa).

The N-terminal stretch at 1–21 (MSFLRPTLALLAVTALVTTSA) is a signal peptide. Asparagine 45 is a glycosylation site (N-linked (GlcNAc...) asparagine). A Secondary area of contact motif is present at residues 68-72 (QVVSG).

It belongs to the cystatin family.

It localises to the secreted. Secreted effector that interacts with and inhibits host apoplastic pathogenesis-related papain-like cysteine proteases. Inhibition of host proteases by a pathogen extracellular protease inhibitor forms a specific type of defense-counterdefense mechanism between plants and microbial pathogens. The chain is Cystatin-like cysteine protease inhibitor EPIC2A from Phytophthora infestans (strain T30-4) (Potato late blight agent).